Consider the following 375-residue polypeptide: Protein MGF 360-4L (375 aa).

This sequence belongs to the asfivirus MGF 360 family.

Functionally, plays a role in virus cell tropism, and may be required for efficient virus replication in macrophages. The chain is Protein MGF 360-4L from Ornithodoros (relapsing fever ticks).